Reading from the N-terminus, the 660-residue chain is Leucine-rich repeat transmembrane protein FLRT2 (660 aa).

Positions 1 to 35 (MGLQTTKWPSHGAFFLKSWLIISLGLYSQVSKLLA) are cleaved as a signal peptide. 2 disulfide bridges follow: cysteine 36-cysteine 42 and cysteine 40-cysteine 49. In terms of domain architecture, LRRNT spans 36–63 (CPSVCRCDRNFVYCNERSLTSVPLGIPE). Residues 36–541 (CPSVCRCDRN…TTSHSMGSPF (506 aa)) are Extracellular-facing. LRR repeat units lie at residues 64 to 85 (GVTV…AELH), 89 to 109 (SVHT…NLPK), 110 to 131 (NVRV…ALAQ), 134 to 155 (KLEE…DGAF), 160 to 181 (SLKL…LPVD), 182 to 202 (LQEL…AFQN), 205 to 225 (SLER…AEGT), 231 to 252 (KLKE…LPGT), 253 to 274 (HLIR…AFSN), and 277 to 298 (KLER…VFDN). Asparagine 202 carries an N-linked (GlcNAc...) asparagine glycan. Asparagine 298 is a glycosylation site (N-linked (GlcNAc...) asparagine). In terms of domain architecture, LRRCT spans 310–362 (NPWFCDCSIKWVTEWLKYIPSSLNVRGFMCQGPEQVRGMAVRELNMNLLSCPT). Cystine bridges form between cysteine 314–cysteine 339 and cysteine 316–cysteine 360. Positions 373 to 409 (APSTASPTTQPPTLSIPNPSRSYTPPTPTTSKLPTIP) are enriched in low complexity. Residues 373–413 (APSTASPTTQPPTLSIPNPSRSYTPPTPTTSKLPTIPDWDG) are disordered. The 99-residue stretch at 419–517 (PPISERIQLS…ICSEATTHAS (99 aa)) folds into the Fibronectin type-III domain. N-linked (GlcNAc...) asparagine glycans are attached at residues asparagine 433 and asparagine 521. The helical transmembrane segment at 542–562 (LLAGLIGGAVIFVLVVLLSVF) threads the bilayer. Over 563-660 (CWHMHKKGRY…SVPDLEHCHT (98 aa)) the chain is Cytoplasmic.

In terms of assembly, self-associates (via leucine-rich repeats), giving rise to homooligomers. Interacts with FGFR1. Interacts with FGFR2. Interacts (via extracellular domain) with ADGRL1/LPHN1. Interacts (via extracellular domain) with ADGRL3 (via olfactomedin-like domain). Interacts (via extracellular domain) with UNC5D (via the first Ig-like domain). Can also interact (via extracellular domain) with UNC5B, but with much lower affinity. Interacts (via extracellular domain) with FN1. In terms of processing, N-glycosylated. Proteolytic cleavage in the juxtamembrane region gives rise to a soluble ectodomain. Cleavage is probably effected by a metalloprotease. Expressed in pancreas, skeletal muscle, brain, and heart.

The protein localises to the cell membrane. Its subcellular location is the endoplasmic reticulum membrane. It is found in the cell junction. It localises to the focal adhesion. The protein resides in the secreted. The protein localises to the extracellular space. Its subcellular location is the extracellular matrix. It is found in the microsome membrane. It localises to the synapse. The protein resides in the synaptosome. Functionally, functions in cell-cell adhesion, cell migration and axon guidance. Mediates cell-cell adhesion via its interactions with ADGRL3 and probably also other latrophilins that are expressed at the surface of adjacent cells. May play a role in the migration of cortical neurons during brain development via its interaction with UNC5D. Mediates axon growth cone collapse and plays a repulsive role in neuron guidance via its interaction with UNC5D, and possibly also other UNC-5 family members. Plays a role in fibroblast growth factor-mediated signaling cascades. Required for normal organization of the cardiac basement membrane during embryogenesis, and for normal embryonic epicardium and heart morphogenesis. This is Leucine-rich repeat transmembrane protein FLRT2 (FLRT2) from Homo sapiens (Human).